Reading from the N-terminus, the 643-residue chain is 1-deoxy-D-xylulose-5-phosphate synthase (643 aa).

Residues H72 and 113–115 contribute to the thiamine diphosphate site; that span reads GHA. D144 is a Mg(2+) binding site. Thiamine diphosphate contacts are provided by residues 145–146, N174, Y287, and E370; that span reads GA. N174 contacts Mg(2+).

Belongs to the transketolase family. DXPS subfamily. In terms of assembly, homodimer. Requires Mg(2+) as cofactor. Thiamine diphosphate serves as cofactor.

The catalysed reaction is D-glyceraldehyde 3-phosphate + pyruvate + H(+) = 1-deoxy-D-xylulose 5-phosphate + CO2. It participates in metabolic intermediate biosynthesis; 1-deoxy-D-xylulose 5-phosphate biosynthesis; 1-deoxy-D-xylulose 5-phosphate from D-glyceraldehyde 3-phosphate and pyruvate: step 1/1. Catalyzes the acyloin condensation reaction between C atoms 2 and 3 of pyruvate and glyceraldehyde 3-phosphate to yield 1-deoxy-D-xylulose-5-phosphate (DXP). This chain is 1-deoxy-D-xylulose-5-phosphate synthase, found in Prochlorococcus marinus (strain SARG / CCMP1375 / SS120).